We begin with the raw amino-acid sequence, 215 residues long: Adenylate kinase (215 aa).

Residue 10-15 coordinates ATP; that stretch reads GAGKGT. The segment at 30 to 59 is NMP; the sequence is STGDLLRAAVAAGTPLGKEAKAYMDRGELV. Residues Thr31, Arg36, 57–59, 85–88, and Gln92 each bind AMP; these read ELV and GFPR. An LID region spans residues 126–163; it reads GRRTCKSCGQMYNVYYSPSKVEGKCDKCGGELFQRDDD. Residue Arg127 coordinates ATP. Positions 130, 133, 150, and 153 each coordinate Zn(2+). 2 residues coordinate AMP: Arg160 and Arg171. ATP is bound at residue Gly199.

This sequence belongs to the adenylate kinase family. Monomer.

It localises to the cytoplasm. It carries out the reaction AMP + ATP = 2 ADP. Its pathway is purine metabolism; AMP biosynthesis via salvage pathway; AMP from ADP: step 1/1. Functionally, catalyzes the reversible transfer of the terminal phosphate group between ATP and AMP. Plays an important role in cellular energy homeostasis and in adenine nucleotide metabolism. This is Adenylate kinase from Thermodesulfovibrio yellowstonii (strain ATCC 51303 / DSM 11347 / YP87).